The following is a 346-amino-acid chain: Low specificity L-threonine aldolase (346 aa).

Lys207 carries the post-translational modification N6-(pyridoxal phosphate)lysine.

Belongs to the threonine aldolase family. Homotetramer. Pyridoxal 5'-phosphate is required as a cofactor.

It catalyses the reaction L-threonine = acetaldehyde + glycine. It carries out the reaction L-allo-threonine = acetaldehyde + glycine. Functionally, catalyzes the cleavage of L-allo-threonine and L-threonine to glycine and acetaldehyde. Can also act on L-erythro-phenylserine, L-threo-phenylserine, L-beta-3,4-methylenedioxyphenylserine and L-beta-3,4-dihydroxyphenylserine. In Pseudomonas sp. (strain NCIMB 10558), this protein is Low specificity L-threonine aldolase (ltaE).